Here is a 287-residue protein sequence, read N- to C-terminus: Glutamate racemase (287 aa).

Substrate contacts are provided by residues aspartate 32–serine 33 and tyrosine 64–glycine 65. The active-site Proton donor/acceptor is cysteine 96. A substrate-binding site is contributed by asparagine 97–threonine 98. Cysteine 208 functions as the Proton donor/acceptor in the catalytic mechanism. Substrate is bound at residue threonine 209–histidine 210.

The protein belongs to the aspartate/glutamate racemases family.

It catalyses the reaction L-glutamate = D-glutamate. It participates in cell wall biogenesis; peptidoglycan biosynthesis. In terms of biological role, provides the (R)-glutamate required for cell wall biosynthesis. This Serratia proteamaculans (strain 568) protein is Glutamate racemase.